The sequence spans 410 residues: Elongation factor Tu, chloroplastic (410 aa).

The region spanning 10-215 is the tr-type G domain; sequence KPHINIGTIG…MVDKYFPTPE (206 aa). Residues 19–26 form a G1 region; that stretch reads GHVDHGKT. GTP is bound at residue 19-26; sequence GHVDHGKT. Residue threonine 26 participates in Mg(2+) binding. Residues 61–65 are G2; that stretch reads GITIN. The G3 stretch occupies residues 82–85; sequence DCPG. GTP is bound by residues 82 to 86 and 137 to 140; these read DCPGH and NKAD. The G4 stretch occupies residues 137 to 140; the sequence is NKAD. The interval 175-177 is G5; it reads SAL.

The protein belongs to the TRAFAC class translation factor GTPase superfamily. Classic translation factor GTPase family. EF-Tu/EF-1A subfamily.

Its subcellular location is the plastid. The protein localises to the chloroplast. It carries out the reaction GTP + H2O = GDP + phosphate + H(+). Its function is as follows. GTP hydrolase that promotes the GTP-dependent binding of aminoacyl-tRNA to the A-site of ribosomes during protein biosynthesis. The polypeptide is Elongation factor Tu, chloroplastic (tufA) (Cyanidium caldarium (Red alga)).